The sequence spans 263 residues: UPF0758 protein NGR_c13970 (263 aa).

The MPN domain occupies 141 to 263 (VLSSWSAVID…HVSMKGLRLF (123 aa)). Histidine 212, histidine 214, and aspartate 225 together coordinate Zn(2+). Residues 212–225 (HNHPSGDPTPSRAD) carry the JAMM motif motif.

The protein belongs to the UPF0758 family.

This chain is UPF0758 protein NGR_c13970, found in Sinorhizobium fredii (strain NBRC 101917 / NGR234).